Here is a 306-residue protein sequence, read N- to C-terminus: UDP-N-acetylenolpyruvoylglucosamine reductase (306 aa).

In terms of domain architecture, FAD-binding PCMH-type spans Val-34–Ser-198. Arg-177 is an active-site residue. Ser-227 acts as the Proton donor in catalysis. Glu-297 is a catalytic residue.

The protein belongs to the MurB family. FAD serves as cofactor.

It is found in the cytoplasm. It carries out the reaction UDP-N-acetyl-alpha-D-muramate + NADP(+) = UDP-N-acetyl-3-O-(1-carboxyvinyl)-alpha-D-glucosamine + NADPH + H(+). It functions in the pathway cell wall biogenesis; peptidoglycan biosynthesis. Functionally, cell wall formation. The sequence is that of UDP-N-acetylenolpyruvoylglucosamine reductase from Clostridium botulinum (strain 657 / Type Ba4).